We begin with the raw amino-acid sequence, 87 residues long: Retinal rod rhodopsin-sensitive cGMP 3',5'-cyclic phosphodiesterase subunit gamma (87 aa).

N-acetylmethionine is present on Met1. A compositionally biased stretch (basic and acidic residues) spans Met1–Ser12. Residues Met1–Pro55 are disordered. The span at Gly26–Lys44 shows a compositional bias: basic residues.

This sequence belongs to the rod/cone cGMP-PDE gamma subunit family. As to quaternary structure, oligomer composed of two catalytic chains (alpha and beta), an inhibitory chain (gamma) and the delta chain.

It carries out the reaction 3',5'-cyclic GMP + H2O = GMP + H(+). Participates in processes of transmission and amplification of the visual signal. cGMP-PDEs are the effector molecules in G-protein-mediated phototransduction in vertebrate rods and cones. The sequence is that of Retinal rod rhodopsin-sensitive cGMP 3',5'-cyclic phosphodiesterase subunit gamma (PDE6G) from Canis lupus familiaris (Dog).